The chain runs to 835 residues: Outer membrane usher protein FasD (835 aa).

Positions 1–21 (MNKYPPLLTMLIIGIGSNAVA) are cleaved as a signal peptide. Cysteines 810 and 834 form a disulfide.

Belongs to the fimbrial export usher family.

It is found in the cell outer membrane. Functionally, involved in the export and assembly of the 987P fimbriae subunits across the outer membrane. The polypeptide is Outer membrane usher protein FasD (fasD) (Escherichia coli).